A 93-amino-acid polypeptide reads, in one-letter code: MQVTDVRIRRVTAEGKMKAIVSVTFDDEFVVHDIKIIEGQNGLFIAMPSRKMGEGDFRDIAHPINSSTRTKLQDAIFAEYEKMSDMEEEAANE.

Belongs to the SpoVG family.

In terms of biological role, could be involved in septation. This is Putative septation protein SpoVG from Alkaliphilus oremlandii (strain OhILAs) (Clostridium oremlandii (strain OhILAs)).